The chain runs to 393 residues: MSSLRGLGNIARRWRELNGVSYWKGLLDPLDVDLRNNIINYGELSQAAYTGLNRERRSRYAGSCLFSRKDFLSRVDVSNPNLYVITKFIYAMCTVSLPDAFMIKSWSKAAWSKQSNWMGFVAVATDEGKEVLGRRDVVVAWRGTIRMVEWMDDLDISLVPASEIVRPGSADDPCVHGGWLSVYTSADPESQYNKQSARYQVLNEIKRLQDMYEHEETSITITGHSLGAALATINATDIVSNGYNKSCPVSAFVFGSPRVGNPDFQKAFDSAPDLRLLRIRNSPDVVPNWPKLGYSDAGTELMIDTGKSPYLKAPGNPLTWHDMECYMHGVAGTQGSNGGFKLEIDRDIALVNKHEDALKNEYAIPSSWWVVQNKGMVKGTDGRWHLADHEDDD.

A coiled-coil region spans residues 200 to 220 (QVLNEIKRLQDMYEHEETSIT). Serine 225 functions as the Acyl-ester intermediate in the catalytic mechanism. Catalysis depends on charge relay system residues serine 225, aspartate 284, and histidine 321.

It belongs to the AB hydrolase superfamily. Lipase family.

The protein resides in the cytoplasm. Functionally, acylhydrolase that catalyzes the hydrolysis of phospholipids at the sn-1 position. This chain is Phospholipase A1-II 1, found in Oryza sativa subsp. indica (Rice).